A 477-amino-acid chain; its full sequence is Glycogen synthase (477 aa).

Lys15 provides a ligand contact to ADP-alpha-D-glucose.

It belongs to the glycosyltransferase 1 family. Bacterial/plant glycogen synthase subfamily.

The enzyme catalyses [(1-&gt;4)-alpha-D-glucosyl](n) + ADP-alpha-D-glucose = [(1-&gt;4)-alpha-D-glucosyl](n+1) + ADP + H(+). The protein operates within glycan biosynthesis; glycogen biosynthesis. Its function is as follows. Synthesizes alpha-1,4-glucan chains using ADP-glucose. This chain is Glycogen synthase (glgA), found in Salmonella typhimurium (strain LT2 / SGSC1412 / ATCC 700720).